We begin with the raw amino-acid sequence, 360 residues long: Probable dual-specificity RNA methyltransferase RlmN (360 aa).

Glutamate 91 acts as the Proton acceptor in catalysis. The 239-residue stretch at 97-335 (QHYGQSVCVT…CVVRQEHGTD (239 aa)) folds into the Radical SAM core domain. Cysteine 104 and cysteine 340 are disulfide-bonded. Positions 111, 115, and 118 each coordinate [4Fe-4S] cluster. S-adenosyl-L-methionine is bound by residues 163–164 (GE), serine 195, 218–220 (SLH), and asparagine 296. Cysteine 340 functions as the S-methylcysteine intermediate in the catalytic mechanism.

Belongs to the radical SAM superfamily. RlmN family. The cofactor is [4Fe-4S] cluster.

The protein resides in the cytoplasm. It carries out the reaction adenosine(2503) in 23S rRNA + 2 reduced [2Fe-2S]-[ferredoxin] + 2 S-adenosyl-L-methionine = 2-methyladenosine(2503) in 23S rRNA + 5'-deoxyadenosine + L-methionine + 2 oxidized [2Fe-2S]-[ferredoxin] + S-adenosyl-L-homocysteine. The catalysed reaction is adenosine(37) in tRNA + 2 reduced [2Fe-2S]-[ferredoxin] + 2 S-adenosyl-L-methionine = 2-methyladenosine(37) in tRNA + 5'-deoxyadenosine + L-methionine + 2 oxidized [2Fe-2S]-[ferredoxin] + S-adenosyl-L-homocysteine. In terms of biological role, specifically methylates position 2 of adenine 2503 in 23S rRNA and position 2 of adenine 37 in tRNAs. The protein is Probable dual-specificity RNA methyltransferase RlmN of Streptococcus equi subsp. zooepidemicus (strain H70).